The chain runs to 448 residues: Methionine aminopeptidase 2 (448 aa).

A disordered region spans residues methionine 1–aspartate 47. The span at lysine 24 to serine 34 shows a compositional bias: basic residues. Histidine 198 lines the substrate pocket. Aspartate 218, aspartate 229, and histidine 298 together coordinate a divalent metal cation. Substrate is bound at residue histidine 306. Positions 331 and 429 each coordinate a divalent metal cation.

Belongs to the peptidase M24A family. Methionine aminopeptidase eukaryotic type 2 subfamily. Requires Co(2+) as cofactor. The cofactor is Zn(2+). It depends on Mn(2+) as a cofactor. Fe(2+) serves as cofactor.

The protein localises to the cytoplasm. It catalyses the reaction Release of N-terminal amino acids, preferentially methionine, from peptides and arylamides.. In terms of biological role, cotranslationally removes the N-terminal methionine from nascent proteins. The N-terminal methionine is often cleaved when the second residue in the primary sequence is small and uncharged (Met-Ala-, Cys, Gly, Pro, Ser, Thr, or Val). This chain is Methionine aminopeptidase 2, found in Komagataella phaffii (strain GS115 / ATCC 20864) (Yeast).